Here is a 98-residue protein sequence, read N- to C-terminus: C-X-C motif chemokine 10 (98 aa).

A signal peptide spans 1–21 (MNPSAAVVLCLVLLSLSGTQG). At R26 the chain carries Citrulline. 2 cysteine pairs are disulfide-bonded: C30–C57 and C32–C74.

This sequence belongs to the intercrine alpha (chemokine CxC) family. Monomer, dimer, and tetramer. Interacts with CXCR3 (via N-terminus). In the central nervous system, CXCL10 is predominantly localized to activated neurons. Expressed in both microglia and astrocytes.

The protein resides in the secreted. Its function is as follows. Pro-inflammatory cytokine that is involved in a wide variety of processes such as chemotaxis, differentiation, and activation of peripheral immune cells, regulation of cell growth, apoptosis and modulation of angiostatic effects. Plays thereby an important role during viral infections by stimulating the activation and migration of immune cells to the infected sites. Mechanistically, binding of CXCL10 to the CXCR3 receptor activates G protein-mediated signaling and results in downstream activation of phospholipase C-dependent pathway, an increase in intracellular calcium production and actin reorganization. In turn, recruitment of activated Th1 lymphocytes occurs at sites of inflammation. Activation of the CXCL10/CXCR3 axis also plays an important role in neurons in response to brain injury for activating microglia, the resident macrophage population of the central nervous system, and directing them to the lesion site. This recruitment is an essential element for neuronal reorganization. This is C-X-C motif chemokine 10 (Cxcl10) from Rattus norvegicus (Rat).